Reading from the N-terminus, the 271-residue chain is Type II restriction enzyme ScrFI (271 aa).

The catalysed reaction is Endonucleolytic cleavage of DNA to give specific double-stranded fragments with terminal 5'-phosphates.. A P subtype restriction enzyme that recognizes the double-stranded sequence 5'-CCNGG-3' and cleaves after C-2. The sequence is that of Type II restriction enzyme ScrFI from Lactococcus lactis subsp. cremoris (Streptococcus cremoris).